Here is an 83-residue protein sequence, read N- to C-terminus: Small ribosomal subunit protein eS21 (83 aa).

It belongs to the eukaryotic ribosomal protein eS21 family. In terms of assembly, component of the 40S small ribosomal subunit. Interacts with sta.

Its subcellular location is the cytoplasm. It is found in the cytosol. The protein localises to the rough endoplasmic reticulum. May be an associated component of the ribosome rather than a core structural subunit. May act as a translation initiation factor. Has a role in regulation of cell proliferation in the hematopoietic organs and the imaginal disks of larva. This Drosophila simulans (Fruit fly) protein is Small ribosomal subunit protein eS21 (RpS21).